The following is an 87-amino-acid chain: Small ribosomal subunit protein bS20 (87 aa).

This sequence belongs to the bacterial ribosomal protein bS20 family.

In terms of biological role, binds directly to 16S ribosomal RNA. In Alkaliphilus metalliredigens (strain QYMF), this protein is Small ribosomal subunit protein bS20.